Here is a 375-residue protein sequence, read N- to C-terminus: tRNA-specific 2-thiouridylase MnmA (375 aa).

Residues 13 to 20 and Met-39 contribute to the ATP site; that span reads AMSGGVDS. Residue Cys-111 is the Nucleophile of the active site. Cys-111 and Cys-208 form a disulfide bridge. An ATP-binding site is contributed by Gly-135. Positions 158–160 are interaction with tRNA; the sequence is KDQ. The active-site Cysteine persulfide intermediate is Cys-208. The segment at 313–314 is interaction with tRNA; it reads RY.

Belongs to the MnmA/TRMU family.

It localises to the cytoplasm. The enzyme catalyses S-sulfanyl-L-cysteinyl-[protein] + uridine(34) in tRNA + AH2 + ATP = 2-thiouridine(34) in tRNA + L-cysteinyl-[protein] + A + AMP + diphosphate + H(+). In terms of biological role, catalyzes the 2-thiolation of uridine at the wobble position (U34) of tRNA, leading to the formation of s(2)U34. This Geotalea uraniireducens (strain Rf4) (Geobacter uraniireducens) protein is tRNA-specific 2-thiouridylase MnmA.